We begin with the raw amino-acid sequence, 668 residues long: tRNA 5-methylaminomethyl-2-thiouridine biosynthesis bifunctional protein MnmC (668 aa).

Residues 1–245 (MKHYAIQPAN…KREMLCGVME (245 aa)) are tRNA (mnm(5)s(2)U34)-methyltransferase. Residues 270–668 (IGGGIASALL…LLKGKAVKAG (399 aa)) form an FAD-dependent cmnm(5)s(2)U34 oxidoreductase region.

This sequence in the N-terminal section; belongs to the methyltransferase superfamily. tRNA (mnm(5)s(2)U34)-methyltransferase family. It in the C-terminal section; belongs to the DAO family. Requires FAD as cofactor.

It is found in the cytoplasm. It catalyses the reaction 5-aminomethyl-2-thiouridine(34) in tRNA + S-adenosyl-L-methionine = 5-methylaminomethyl-2-thiouridine(34) in tRNA + S-adenosyl-L-homocysteine + H(+). Catalyzes the last two steps in the biosynthesis of 5-methylaminomethyl-2-thiouridine (mnm(5)s(2)U) at the wobble position (U34) in tRNA. Catalyzes the FAD-dependent demodification of cmnm(5)s(2)U34 to nm(5)s(2)U34, followed by the transfer of a methyl group from S-adenosyl-L-methionine to nm(5)s(2)U34, to form mnm(5)s(2)U34. The polypeptide is tRNA 5-methylaminomethyl-2-thiouridine biosynthesis bifunctional protein MnmC (Escherichia coli (strain SMS-3-5 / SECEC)).